Consider the following 542-residue polypeptide: MKMMASRKSLWVLLFIVIFWISFTVFRNPVKLWAVFKLPASFNQWDLIMKSSCPKVPLNPSVSPTETELRIREILEKLNKQIPPRPFAHLNNTTSATHSIATILNPQDTYCVGDQLDILVEARDHLRNRKGYGGDFLRARMSSPALKAGASGKVTDFNNGTYLVSFTLFWEGQVSLSILLMHPSEGVSALWRARNQGYDRIIFSGHFVSGASQVHTDCALVLNSSVELCQYLDAQDQEAFYCVKPPNVPCAAITHMHSKNKDISYLSQQERSLFERSNIAVEIMGKSNVISVSKCNKAVPVKKKCKFGMASAIPTGHVWKNTWNPASCSLAPIKMKDCLRGKLVHLMGDSTMRQWMEYFKSKINTLRPVDLHETGRLQHQLAVDLDEKINIQWQKHGFPLIGSLVYSVKEIENTARIIDRIGGEKNTVIVFSLGQHFRPFPIDVFIRRALSVHRALQRLLLRSPDTLVVLKTENTRELNNDMERFSDFHGYTQYLALKNIFQDLRVGVIDAWDMTVAYGTNDVHPPEEVVRSEINIFLNYIC.

Residues 1-26 form the signal peptide; sequence MKMMASRKSLWVLLFIVIFWISFTVF. Residues Asn-91, Asn-92, Asn-159, and Asn-223 are each glycosylated (N-linked (GlcNAc...) asparagine).

This sequence belongs to the NXPE family.

It is found in the secreted. This Rattus norvegicus (Rat) protein is NXPE family member 4 (Nxpe4).